Consider the following 120-residue polypeptide: uncharacterized protein (120 aa).

This is an uncharacterized protein from Bacillus subtilis (strain 168).